Consider the following 156-residue polypeptide: Small ribosomal subunit protein uS7 (156 aa).

This sequence belongs to the universal ribosomal protein uS7 family. In terms of assembly, part of the 30S ribosomal subunit. Contacts proteins S9 and S11.

Its function is as follows. One of the primary rRNA binding proteins, it binds directly to 16S rRNA where it nucleates assembly of the head domain of the 30S subunit. Is located at the subunit interface close to the decoding center, probably blocks exit of the E-site tRNA. The chain is Small ribosomal subunit protein uS7 from Geobacter metallireducens (strain ATCC 53774 / DSM 7210 / GS-15).